Consider the following 1009-residue polypeptide: Helicase-like transcription factor (1009 aa).

Residue arginine 27 is modified to Omega-N-methylarginine. A DNA-binding region spans residues 38–287 (EFQDVIPPDD…FSEKDRPENV (250 aa)). Lysine 112 is covalently cross-linked (Glycyl lysine isopeptide (Lys-Gly) (interchain with G-Cter in SUMO2)). Tyrosine 195 is modified (phosphotyrosine; by JAK2). A Glycyl lysine isopeptide (Lys-Gly) (interchain with G-Cter in SUMO2) cross-link involves residue lysine 211. 294 to 301 (DDMGLGKT) serves as a coordination point for ATP. The tract at residues 336–365 (DDSMKLGGNNTSEKADGLSKDASRCSEQPS) is disordered. Residues 348–359 (EKADGLSKDASR) show a composition bias toward basic and acidic residues. Residues serine 397, serine 398, and serine 400 each carry the phosphoserine modification. The Helicase ATP-binding domain occupies 435 to 606 (IEDVAFACAL…WSLLSFLKLK (172 aa)). The DEGH box motif lies at 557-560 (DEGH). Residue threonine 736 is modified to Phosphothreonine. An RING-type zinc finger spans residues 760 to 801 (CAICLDSLTVPVITHCAHVFCKPCICQVIQNEQPHAKCPLCR). One can recognise a Helicase C-terminal domain in the interval 837–996 (ALMHALTDLR…TKKPNADEMK (160 aa)). The tract at residues 925–1009 (SRVFLMDPAW…INEIRTLIDL (85 aa)) is interaction with SP1 and SP3.

The protein belongs to the SNF2/RAD54 helicase family. RAD16 subfamily. Interacts with SP1 and SP3 independently of DNA; the interaction with these transcriptional factors may be required for basal transcription of target genes. Interacts with EGR1; the interaction requires prior binding to DNA and represses c-Rel via a DNA looping mechanism. Interacts with GATA4. Interacts with PCNA; the interaction promotes polyubiquitination of PCNA through association with the UBE2B-RAD18 and UBE2V2-UBE2N ubiquitin ligase complexes. Interacts with RAD18, SHPRH, UBE2V2 and UBE2N. Expressed in brain, heart, kidney, liver, lung, pancreas, placenta and skeletal muscle.

The protein resides in the cytoplasm. The protein localises to the nucleus. Its subcellular location is the nucleolus. It localises to the nucleoplasm. It carries out the reaction S-ubiquitinyl-[E2 ubiquitin-conjugating enzyme]-L-cysteine + [acceptor protein]-L-lysine = [E2 ubiquitin-conjugating enzyme]-L-cysteine + N(6)-ubiquitinyl-[acceptor protein]-L-lysine.. It functions in the pathway protein modification; protein ubiquitination. Functionally, has both helicase and E3 ubiquitin ligase activities. Possesses intrinsic ATP-dependent nucleosome-remodeling activity; This activity may be required for transcriptional activation or repression of specific target promoters. These may include the SERPINE1 and HIV-1 promoters and the SV40 enhancer, to which this protein can bind directly. Plays a role in error-free postreplication repair (PRR) of damaged DNA and maintains genomic stability through acting as a ubiquitin ligase for 'Lys-63'-linked polyubiquitination of chromatin-bound PCNA. This chain is Helicase-like transcription factor (HLTF), found in Homo sapiens (Human).